The following is a 419-amino-acid chain: Serine--tRNA ligase (419 aa).

226 to 228 provides a ligand contact to L-serine; that stretch reads TSE. Residues 257-259 and valine 273 each bind ATP; that span reads RRE. Glutamate 280 contacts L-serine. 344–347 contacts ATP; sequence ELTS. Threonine 379 serves as a coordination point for L-serine.

It belongs to the class-II aminoacyl-tRNA synthetase family. Type-1 seryl-tRNA synthetase subfamily. Homodimer. The tRNA molecule binds across the dimer.

The protein localises to the cytoplasm. It carries out the reaction tRNA(Ser) + L-serine + ATP = L-seryl-tRNA(Ser) + AMP + diphosphate + H(+). The catalysed reaction is tRNA(Sec) + L-serine + ATP = L-seryl-tRNA(Sec) + AMP + diphosphate + H(+). It participates in aminoacyl-tRNA biosynthesis; selenocysteinyl-tRNA(Sec) biosynthesis; L-seryl-tRNA(Sec) from L-serine and tRNA(Sec): step 1/1. In terms of biological role, catalyzes the attachment of serine to tRNA(Ser). Is also able to aminoacylate tRNA(Sec) with serine, to form the misacylated tRNA L-seryl-tRNA(Sec), which will be further converted into selenocysteinyl-tRNA(Sec). The polypeptide is Serine--tRNA ligase (Mycolicibacterium vanbaalenii (strain DSM 7251 / JCM 13017 / BCRC 16820 / KCTC 9966 / NRRL B-24157 / PYR-1) (Mycobacterium vanbaalenii)).